We begin with the raw amino-acid sequence, 273 residues long: Rhamnulose-1-phosphate aldolase (273 aa).

Residue Glu-117 is part of the active site. 3 residues coordinate Zn(2+): His-140, His-142, and His-211.

It belongs to the aldolase class II family. RhaD subfamily. Zn(2+) serves as cofactor.

It is found in the cytoplasm. The enzyme catalyses L-rhamnulose 1-phosphate = (S)-lactaldehyde + dihydroxyacetone phosphate. It participates in carbohydrate degradation; L-rhamnose degradation; glycerone phosphate from L-rhamnose: step 3/3. Catalyzes the reversible cleavage of L-rhamnulose-1-phosphate to dihydroxyacetone phosphate (DHAP) and L-lactaldehyde. This is Rhamnulose-1-phosphate aldolase from Listeria monocytogenes serotype 4a (strain HCC23).